A 360-amino-acid chain; its full sequence is Peptide chain release factor 1 (360 aa).

Gln235 bears the N5-methylglutamine mark.

It belongs to the prokaryotic/mitochondrial release factor family. Methylated by PrmC. Methylation increases the termination efficiency of RF1.

The protein localises to the cytoplasm. Peptide chain release factor 1 directs the termination of translation in response to the peptide chain termination codons UAG and UAA. This chain is Peptide chain release factor 1, found in Dechloromonas aromatica (strain RCB).